A 303-amino-acid polypeptide reads, in one-letter code: Sulfotransferase 6B1 (303 aa).

A 3'-phosphoadenylyl sulfate-binding site is contributed by 65-70 (KCGSNW). Catalysis depends on His118, which acts as the Proton acceptor. Residues Arg140, Ser148, Tyr203, 237–242 (STFQAM), and 259–261 (RKG) contribute to the 3'-phosphoadenylyl sulfate site.

The protein belongs to the sulfotransferase 1 family. In terms of tissue distribution, specifically expressed in kidney and testis.

The protein localises to the cytoplasm. Its subcellular location is the cytosol. The enzyme catalyses thyroxine + 3'-phosphoadenylyl sulfate = thyroxine sulfate + adenosine 3',5'-bisphosphate + H(+). Its function is as follows. Sulfotransferase that utilizes 3'-phospho-5'-adenylyl sulfate (PAPS) as sulfonate donor to catalyze the sulfate conjugation of thyroxine. Involved in the metabolism of thyroxine. In Homo sapiens (Human), this protein is Sulfotransferase 6B1 (SULT6B1).